The following is a 341-amino-acid chain: Ribosomal RNA small subunit methyltransferase H (341 aa).

S-adenosyl-L-methionine contacts are provided by residues 47-49 (GGY), Asp64, Phe91, Asp109, and Gln116.

It belongs to the methyltransferase superfamily. RsmH family.

The protein resides in the cytoplasm. It carries out the reaction cytidine(1402) in 16S rRNA + S-adenosyl-L-methionine = N(4)-methylcytidine(1402) in 16S rRNA + S-adenosyl-L-homocysteine + H(+). Functionally, specifically methylates the N4 position of cytidine in position 1402 (C1402) of 16S rRNA. The chain is Ribosomal RNA small subunit methyltransferase H from Rhizobium etli (strain ATCC 51251 / DSM 11541 / JCM 21823 / NBRC 15573 / CFN 42).